A 382-amino-acid chain; its full sequence is Anhydro-N-acetylmuramic acid kinase (382 aa).

ATP is bound at residue 15 to 22 (GTSLDGVD).

Belongs to the anhydro-N-acetylmuramic acid kinase family.

It catalyses the reaction 1,6-anhydro-N-acetyl-beta-muramate + ATP + H2O = N-acetyl-D-muramate 6-phosphate + ADP + H(+). It functions in the pathway amino-sugar metabolism; 1,6-anhydro-N-acetylmuramate degradation. The protein operates within cell wall biogenesis; peptidoglycan recycling. Functionally, catalyzes the specific phosphorylation of 1,6-anhydro-N-acetylmuramic acid (anhMurNAc) with the simultaneous cleavage of the 1,6-anhydro ring, generating MurNAc-6-P. Is required for the utilization of anhMurNAc either imported from the medium or derived from its own cell wall murein, and thus plays a role in cell wall recycling. This chain is Anhydro-N-acetylmuramic acid kinase, found in Haemophilus influenzae (strain ATCC 51907 / DSM 11121 / KW20 / Rd).